A 322-amino-acid polypeptide reads, in one-letter code: MLQGHERSITQIKYNREGDLLFSSSKDQKPNVWYSLNGERLGTYDGHQGAVWCLDVDWESRKLITGAGDMTTKIWDVEYGTVIASIPTKSSVRTSNFSFSGNQAAYSTDKAMGQNCELFIIDVRNADSSLSEQEPTLRIPMVESKITSMLWGPLDETIITGHDNGNIAIWDIRKGQKVVDSGTDHTAGINDMQLSKDGTMFVTASRDTTAKLFDSESLMCLKTYKTERPVNSAAISPILDHVVLGGGQDAMEVTTTSTKAGKFDSRFFHLIYEEEFARLKGHFGPINSLAFHPDGKSYASGGEDGFVRVQSFDSTYFENIFE.

WD repeat units lie at residues 4-43, 46-85, 141-180, 184-223, and 281-322; these read GHERSITQIKYNREGDLLFSSSKDQKPNVWYSLNGERLGT, GHQGAVWCLDVDWESRKLITGAGDMTTKIWDVEYGTVIAS, MVESKITSMLWGPLDETIITGHDNGNIAIWDIRKGQKVVD, DHTAGINDMQLSKDGTMFVTASRDTTAKLFDSESLMCLKT, and GHFG…NIFE.

It belongs to the eIF-3 subunit I family. In terms of assembly, component of the eukaryotic translation initiation factor 3 (eIF-3) complex. The eIF-3 complex interacts with pix.

It localises to the cytoplasm. Component of the eukaryotic translation initiation factor 3 (eIF-3) complex, which is involved in protein synthesis of a specialized repertoire of mRNAs and, together with other initiation factors, stimulates binding of mRNA and methionyl-tRNAi to the 40S ribosome. The eIF-3 complex specifically targets and initiates translation of a subset of mRNAs involved in cell proliferation. In Drosophila virilis (Fruit fly), this protein is Eukaryotic translation initiation factor 3 subunit I.